Consider the following 1204-residue polypeptide: Major DNA-binding protein (1204 aa).

The disordered stretch occupies residues 289–314; that stretch reads SGTTTARGARRNDVNSTSKPSPSGGF. A zinc finger spans residues 497–510; the sequence is CSLCEKHTRPVCAH. 2 consecutive short sequence motifs (required for filament formation) follow at residues 841 to 842 and 1146 to 1148; these read FW and FNF. Residues 1177-1204 are required for nuclear localization; it reads LKRPPEDDELFDLSGIPIKHGNITMEMI.

This sequence belongs to the herpesviridae major DNA-binding protein family. In terms of assembly, homooligomers. Forms double-helical filaments necessary for the formation of replication compartments within the host nucleus. Interacts with the origin-binding protein. Interacts with the helicase primase complex; this interaction stimulates primer synthesis activity of the helicase-primase complex. Interacts with the DNA polymerase. Interacts with the alkaline exonuclease; this interaction increases its nuclease processivity.

It is found in the host nucleus. In terms of biological role, plays several crucial roles in viral infection. Participates in the opening of the viral DNA origin to initiate replication by interacting with the origin-binding protein. May disrupt loops, hairpins and other secondary structures present on ssDNA to reduce and eliminate pausing of viral DNA polymerase at specific sites during elongation. Promotes viral DNA recombination by performing strand-transfer, characterized by the ability to transfer a DNA strand from a linear duplex to a complementary single-stranded DNA circle. Can also catalyze the renaturation of complementary single strands. Additionally, reorganizes the host cell nucleus, leading to the formation of prereplicative sites and replication compartments. This process is driven by the protein which can form double-helical filaments in the absence of DNA. The protein is Major DNA-binding protein of Homo sapiens (Human).